Consider the following 217-residue polypeptide: Leucyl/phenylalanyl-tRNA--protein transferase (217 aa).

Belongs to the L/F-transferase family.

The protein localises to the cytoplasm. It carries out the reaction N-terminal L-lysyl-[protein] + L-leucyl-tRNA(Leu) = N-terminal L-leucyl-L-lysyl-[protein] + tRNA(Leu) + H(+). The catalysed reaction is N-terminal L-arginyl-[protein] + L-leucyl-tRNA(Leu) = N-terminal L-leucyl-L-arginyl-[protein] + tRNA(Leu) + H(+). The enzyme catalyses L-phenylalanyl-tRNA(Phe) + an N-terminal L-alpha-aminoacyl-[protein] = an N-terminal L-phenylalanyl-L-alpha-aminoacyl-[protein] + tRNA(Phe). Its function is as follows. Functions in the N-end rule pathway of protein degradation where it conjugates Leu, Phe and, less efficiently, Met from aminoacyl-tRNAs to the N-termini of proteins containing an N-terminal arginine or lysine. This Caulobacter vibrioides (strain ATCC 19089 / CIP 103742 / CB 15) (Caulobacter crescentus) protein is Leucyl/phenylalanyl-tRNA--protein transferase.